The chain runs to 213 residues: PRA1 family protein B2 (213 aa).

Residues 1–21 form a disordered region; the sequence is MSSSPAILPVTNQQAATQSQP. A run of 5 helical transmembrane segments spans residues 75 to 94, 98 to 117, 137 to 157, 161 to 181, and 190 to 210; these read LAYF…AFSL, PFSL…LYLF, LLGL…GSLL, LTIG…DDLF, and AGLL…SVVA.

This sequence belongs to the PRA1 family. As to quaternary structure, interacts with PRA1B1, PRA1B3, PRA1B4, PRA1B5, PRA1B6 and PRA1E.

It is found in the endosome membrane. In terms of biological role, may be involved in both secretory and endocytic intracellular trafficking in the endosomal/prevacuolar compartments. This is PRA1 family protein B2 (PRA1B2) from Arabidopsis thaliana (Mouse-ear cress).